A 374-amino-acid chain; its full sequence is MSVPAFIDVTEEDQAAELRAYLKSKGAEISEENSEGGLHIDLAQIIEACDVCLKDDDKDVESSMNSVVSLVLILETDKQEALIESLCEKLVKFREGERPSLRLQLLSNLFHGMDKSIPARYTVYCGLIKVAATCGAIIYIPTDLDQVRKWISDWNLSTEKKHIVLRLLYEALVDCKKSDEAAKVMVELLGSYTDDNASQARLDAHKCIVRALKDPKAFLLDHLLALKPVKFLEGELIHDLLTIFVSAKLSSYVKFYQNNKDFIDSLGLSHEQNMEKMRLLTFMGMAVDNKEISFDTIQQELQIGADEVEAFIIDAVKTKMVYCKIDQTQKRVVVSHSTHRTFGKQQWQQLYDTLNTWKQNLNKVKNSLYSISDA.

The PCI domain maps to 180-339 (EAAKVMVELL…KRVVVSHSTH (160 aa)).

This sequence belongs to the eIF-3 subunit M family. Component of the eukaryotic translation initiation factor 3 (eIF-3) complex, which is composed of 13 subunits: eif3a, eif3b, eif3c, eif3d, eif3e, eif3f, eif3g, eif3h, eif3i, eif3j, eif3k, eif3l and eif3m.

The protein localises to the cytoplasm. In terms of biological role, component of the eukaryotic translation initiation factor 3 (eIF-3) complex, which is involved in protein synthesis of a specialized repertoire of mRNAs and, together with other initiation factors, stimulates binding of mRNA and methionyl-tRNAi to the 40S ribosome. The eIF-3 complex specifically targets and initiates translation of a subset of mRNAs involved in cell proliferation. The protein is Eukaryotic translation initiation factor 3 subunit M (eif3m) of Xenopus tropicalis (Western clawed frog).